The sequence spans 248 residues: Probable transcriptional regulatory protein R02753 (248 aa).

Belongs to the TACO1 family.

Its subcellular location is the cytoplasm. The protein is Probable transcriptional regulatory protein R02753 of Rhizobium meliloti (strain 1021) (Ensifer meliloti).